The following is a 230-amino-acid chain: Demethylmenaquinone methyltransferase (230 aa).

Residues Thr62, Asp80, Asp100–Ala101, and Ser117 each bind S-adenosyl-L-methionine.

It belongs to the class I-like SAM-binding methyltransferase superfamily. MenG/UbiE family.

It carries out the reaction a 2-demethylmenaquinol + S-adenosyl-L-methionine = a menaquinol + S-adenosyl-L-homocysteine + H(+). The protein operates within quinol/quinone metabolism; menaquinone biosynthesis; menaquinol from 1,4-dihydroxy-2-naphthoate: step 2/2. In terms of biological role, methyltransferase required for the conversion of demethylmenaquinol (DMKH2) to menaquinol (MKH2). The sequence is that of Demethylmenaquinone methyltransferase from Mycolicibacterium paratuberculosis (strain ATCC BAA-968 / K-10) (Mycobacterium paratuberculosis).